We begin with the raw amino-acid sequence, 557 residues long: MAAQGFLLIATFLLVLMVLARPLGSGLARLINDIPLPGTTGVERVLFSALGVSDREMNWKQYLSAILGLNMLGLAVLFFMLLGQHYLPLNPQQLPGLSWDLALNTAVSFVTNTNWQSYSGETTLSYFSQMAGLTVQNFLSAASGIAVIFAFIRAFTRQSMSTLGNAWVDLLRITLWVLVPVALLIALFFIQQGALQNFLPYQAVNTVEGAKQLLPMGPVASQEAIKMLGTNGGGFFNANSSHPFENPTTLTNFVQMLAIFLIPTALCFAFGEVAGDRRQGRMLLWAMSVIFVICVGVVMWAEVQGNPHLLALGADSSINMEGKESRFGVLVSSLFAVVTTAASCGAVIAMHDSFTALGGMVPMWLMQIGEVVFGGVGSGLYGMMLFVLLAVFIAGLMIGRTPEYLGKKIDVREMKLTALAILVTPTLVLMGAALAMMTDAGRSAMLNPGPHGFSEVLYAVSSAANNNGSAFAGLSANSPFWNCLLAFCMFVGRFGVIIPVMAIAGSLVSKKSQPASSGTLPTHGPLFVGLLIGTVLLVGALTFIPALALGPVAEYLS.

12 helical membrane-spanning segments follow: residues glycine 5–serine 25, leucine 63–glycine 83, glycine 132–isoleucine 152, leucine 170–isoleucine 190, phenylalanine 253–valine 273, leucine 283–valine 303, valine 329–alanine 349, alanine 356–valine 376, glycine 379–glycine 399, leucine 416–methionine 436, leucine 484–alanine 504, and leucine 526–alanine 546.

This sequence belongs to the KdpA family. As to quaternary structure, the system is composed of three essential subunits: KdpA, KdpB and KdpC.

Its subcellular location is the cell inner membrane. Part of the high-affinity ATP-driven potassium transport (or Kdp) system, which catalyzes the hydrolysis of ATP coupled with the electrogenic transport of potassium into the cytoplasm. This subunit binds the periplasmic potassium ions and delivers the ions to the membrane domain of KdpB through an intramembrane tunnel. In Escherichia coli (strain SMS-3-5 / SECEC), this protein is Potassium-transporting ATPase potassium-binding subunit.